Reading from the N-terminus, the 1017-residue chain is Stereoselective keto-reductase af490 (1017 aa).

Residues 6–138 (NELSGSQVPG…GRLRMTFAGH (133 aa)) are N-terminal hotdog fold. The PKS/mFAS DH domain occupies 6 to 311 (NELSGSQVPG…MSPIAPSTEK (306 aa)). Positions 8-306 (LSGSQVPGAT…LEGLTMSPIA (299 aa)) are dehydratase (DH). Residues 153–311 (LRPVSISPFY…MSPIAPSTEK (159 aa)) form a C-terminal hotdog fold region. A ketoreductase (KR) region spans residues 532-720 (QIRFLRAPFD…VQGGRLLIPR (189 aa)).

The enzyme catalyses fumagillol + NADP(+) = 5-dehydrofumagillol + NADPH + H(+). It participates in secondary metabolite biosynthesis; terpenoid biosynthesis. Functionally, stereoselective keto-reductase; part of the gene cluster that mediates the biosynthesis of fumagillin, a meroterpenoid that has numerous biological activities including irreversible inhibition of human type 2 methionine aminopeptidase (METAP2). Within the pathway, the keto-reductase af490 acts as a 5-dehydrofumagillol 5-reductase that stereoselectively reduces 5-keto-fumagillol to 5R-hydroxy-seco-sesquiterpene. The pathway begins with the conversion of farnesyl pyrophosphate (FPP) to beta-trans-bergamotene by the membrane-bound beta-trans-bergamotene synthase af520. The multifunctional cytochrome P450 monooxygenase af510 then converts beta-trans-bergamotene into 5-keto-demethoxyfumagillol via several oxydation steps. 5-keto-demethoxyfumagillol is then subjected to successive C-6 hydroxylation and O-methylation by the dioxygenase af480 and O-methyltransferase af390-400, respectively, to yield 5-keto-fumagillol, which is then stereoselectively reduced by the keto-reductase af490 to 5R-hydroxy-seco-sesquiterpene. The next step is the polyketide transferase af380-catalyzed transfer of a dodecapentaenoyl group synthesized by the polyketide synthase af370 onto 5R-hydroxy-seco-sesquiterpene which leads to the production of prefumagillin. Finally, oxidative cleavage by the monooxygenase af470 converts prefumagillin to fumagillin. This Aspergillus fumigatus (strain ATCC MYA-4609 / CBS 101355 / FGSC A1100 / Af293) (Neosartorya fumigata) protein is Stereoselective keto-reductase af490.